Consider the following 75-residue polypeptide: Cruzioseptin-6 (75 aa).

A signal peptide spans 1–22; the sequence is MAYLKKSLFLVLFLGLVSLSIC. The propeptide occupies 23 to 43; sequence EEEKREEENEEEQEDDDQSEE. The segment at 24–44 is disordered; it reads EEKREEENEEEQEDDDQSEEK. A compositionally biased stretch (acidic residues) spans 30-41; the sequence is ENEEEQEDDDQS.

Expressed by the skin glands.

The protein localises to the secreted. Its function is as follows. Has antimicrobial activity. The sequence is that of Cruzioseptin-6 from Cruziohyla calcarifer (Splendid leaf frog).